A 445-amino-acid polypeptide reads, in one-letter code: MKPVIALVGRPNVGKSTLFNRLTRSRDALVADLPGLTRDRHYGEGRVGERPYLVVDTGGFEPVAKDGILHEMARQTRQAVEEADVVVFIVDGRNGLAPQDKSIADYLRKTGRPIFLVVNKAEGMKYTAVATDFYELGLGDPRAISAAHGDGVTDMINEALEVAYAGQPEEADEDDPSRGIKIAIVGRPNVGKSTLVNALIGEDRVIAFDMPGTTRDSIYVDFERNGKKYTLIDTAGLRRRGKVFEAIEKFSVVKTLQSISDANVVILLLDAQQDISDQDAHIAGFVVEQGRALVIGVNKWDGLDDHARDRAKADLTRKLKFLDFAKSHFISAAKKTGIGALMRSVDDAYAAAMAKLPTPKLTRALIEAVEFQQPRRRGPVRPKLRYAHQGGQNPPIIVIHGNALDAVTETYKRYLENRFRETFSLTGTPLRIEFRSSNNPYADKG.

EngA-type G domains lie at 3–167 and 180–353; these read PVIA…YAGQ and IKIA…AAAM. GTP-binding positions include 9–16, 56–60, 119–122, 186–193, 233–237, and 298–301; these read GRPNVGKS, DTGGF, NKAE, DTAGL, and NKWD. The KH-like domain occupies 354 to 438; sequence AKLPTPKLTR…PLRIEFRSSN (85 aa).

This sequence belongs to the TRAFAC class TrmE-Era-EngA-EngB-Septin-like GTPase superfamily. EngA (Der) GTPase family. In terms of assembly, associates with the 50S ribosomal subunit.

Its function is as follows. GTPase that plays an essential role in the late steps of ribosome biogenesis. The polypeptide is GTPase Der (Burkholderia cenocepacia (strain HI2424)).